Consider the following 663-residue polypeptide: Methionine--tRNA ligase (663 aa).

The short motif at 10–20 (AYTNGPLHLGH) is the 'HIGH' region element. 4 residues coordinate Zn(2+): C142, C145, C154, and C157. A 'KMSKS' region motif is present at residues 323–327 (KMSTS). T326 is an ATP binding site. The tRNA-binding domain maps to 563–663 (YFGNIDLRVG…RDLPVGSKIH (101 aa)).

Belongs to the class-I aminoacyl-tRNA synthetase family. MetG type 1 subfamily. Homodimer. Zn(2+) serves as cofactor.

It is found in the cytoplasm. The enzyme catalyses tRNA(Met) + L-methionine + ATP = L-methionyl-tRNA(Met) + AMP + diphosphate. Functionally, is required not only for elongation of protein synthesis but also for the initiation of all mRNA translation through initiator tRNA(fMet) aminoacylation. This Methanococcus maripaludis (strain C5 / ATCC BAA-1333) protein is Methionine--tRNA ligase.